A 533-amino-acid chain; its full sequence is Tyrosine-protein kinase transforming protein Fps (533 aa).

A disordered region spans residues 1–46; that stretch reads ASGQLHRPQPQEHTSTSAAAGTWRHTQASESRHRLPHCSAAPSHQD. The segment covering 11–29 has biased composition (polar residues); that stretch reads QEHTSTSAAAGTWRHTQAS. The F-BAR; degenerate domain maps to 50-124; sequence MGFGPELWCP…LQEDRQSVCS (75 aa). An SH2 domain is found at 171–260; it reads WYHGAIPRSE…KSGIVLTRAV (90 aa). The Protein kinase domain maps to 272–525; sequence VLLGERIGRG…PSFGAVHQDL (254 aa). Residues 278-286 and Lys301 contribute to the ATP site; that span reads IGRGNFGEV. Asp394 acts as the Proton acceptor in catalysis. Tyr424 carries the phosphotyrosine; by autocatalysis modification.

This sequence belongs to the protein kinase superfamily. Tyr protein kinase family. Fes/fps subfamily.

It catalyses the reaction L-tyrosyl-[protein] + ATP = O-phospho-L-tyrosyl-[protein] + ADP + H(+). This chain is Tyrosine-protein kinase transforming protein Fps (V-FPS), found in Gallus gallus (Chicken).